A 315-amino-acid polypeptide reads, in one-letter code: DNA-directed RNA polymerase subunit alpha (315 aa).

Residues 1 to 228 (MIGMEKPKIE…EHLELFISLT (228 aa)) form an alpha N-terminal domain (alpha-NTD) region. The interval 245 to 315 (RNKLMEMTIE…FGLSLRQPDD (71 aa)) is alpha C-terminal domain (alpha-CTD).

It belongs to the RNA polymerase alpha chain family. Homodimer. The RNAP catalytic core consists of 2 alpha, 1 beta, 1 beta' and 1 omega subunit. When a sigma factor is associated with the core the holoenzyme is formed, which can initiate transcription.

The catalysed reaction is RNA(n) + a ribonucleoside 5'-triphosphate = RNA(n+1) + diphosphate. In terms of biological role, DNA-dependent RNA polymerase catalyzes the transcription of DNA into RNA using the four ribonucleoside triphosphates as substrates. This chain is DNA-directed RNA polymerase subunit alpha, found in Symbiobacterium thermophilum (strain DSM 24528 / JCM 14929 / IAM 14863 / T).